The following is a 126-amino-acid chain: Large ribosomal subunit protein bL12 (126 aa).

The protein belongs to the bacterial ribosomal protein bL12 family. As to quaternary structure, homodimer. Part of the ribosomal stalk of the 50S ribosomal subunit. Forms a multimeric L10(L12)X complex, where L10 forms an elongated spine to which 2 to 4 L12 dimers bind in a sequential fashion. Binds GTP-bound translation factors.

Forms part of the ribosomal stalk which helps the ribosome interact with GTP-bound translation factors. Is thus essential for accurate translation. The protein is Large ribosomal subunit protein bL12 of Helicobacter hepaticus (strain ATCC 51449 / 3B1).